Consider the following 251-residue polypeptide: Hydroxyacylglutathione hydrolase (251 aa).

Residues His-53, His-55, Asp-57, His-58, His-110, Asp-127, and His-165 each contribute to the Zn(2+) site.

This sequence belongs to the metallo-beta-lactamase superfamily. Glyoxalase II family. In terms of assembly, monomer. It depends on Zn(2+) as a cofactor.

The enzyme catalyses an S-(2-hydroxyacyl)glutathione + H2O = a 2-hydroxy carboxylate + glutathione + H(+). It functions in the pathway secondary metabolite metabolism; methylglyoxal degradation; (R)-lactate from methylglyoxal: step 2/2. Functionally, thiolesterase that catalyzes the hydrolysis of S-D-lactoyl-glutathione to form glutathione and D-lactic acid. The sequence is that of Hydroxyacylglutathione hydrolase from Salmonella gallinarum (strain 287/91 / NCTC 13346).